The following is a 461-amino-acid chain: Fibrinogen C domain-containing protein 1 (461 aa).

Residues 1–24 (MVNDRWKTMGGAAQLEDRPRDKPQ) are disordered. Residues 1–33 (MVNDRWKTMGGAAQLEDRPRDKPQRPSCGYVLC) lie on the Cytoplasmic side of the membrane. Positions 15 to 24 (LEDRPRDKPQ) are enriched in basic and acidic residues. A helical; Signal-anchor for type II membrane protein membrane pass occupies residues 34-54 (TVLLALAVLLAVAVTGAVLFL). The Extracellular segment spans residues 55-461 (NHAHAPGTAP…MKIRPVREDR (407 aa)). A disordered region spans residues 214 to 238 (GRPRNKADLQRAPARGTRPRGCATG). Residues 235–458 (CATGSRPRDC…FSEMKIRPVR (224 aa)) form the Fibrinogen C-terminal domain. Cys-244 and Cys-273 are oxidised to a cystine. Asn-340 carries N-linked (GlcNAc...) asparagine glycosylation. Asp-393 and Asp-395 together coordinate Ca(2+). Cys-401 and Cys-414 are oxidised to a cystine.

In terms of assembly, homotetramer; disulfide-linked. In terms of tissue distribution, expressed in the small and large intestinal epithelial cells with a highly polarized localization to the apical surface corresponding to the brush border and in the ducts of the salivary gland.

It localises to the membrane. In terms of biological role, acetyl group-binding receptor which shows a high-affinity and calcium-dependent binding to acetylated structures such as chitin, some N-acetylated carbohydrates, and amino acids, but not to their non-acetylated counterparts. Can facilitate the endocytosis of acetylated components. The sequence is that of Fibrinogen C domain-containing protein 1 (FIBCD1) from Homo sapiens (Human).